We begin with the raw amino-acid sequence, 95 residues long: Putative ESAT-6-like protein X (95 aa).

Positions 72–95 (HGQKVQRASSSMADTDRSVSSAWS) are disordered.

The protein belongs to the WXG100 family.

The polypeptide is Putative ESAT-6-like protein X (Mycobacterium leprae (strain TN)).